The following is a 410-amino-acid chain: MKMEKALNITSEIGKLQTVLVKRPGSELENITPEYLESLLFDDIPYLKMMQKEHDFFVKTMQGSNIEVLYLEKLAAEALRAANNKESFLTKIIKESNQMDESALYVRDYLMSFDEEEMISKLMSGLKKSEIPERKKKHLNEMMDEQYPFFLDPLPNLYFTRDPAAVIGNGVTINKMFQPARRRESMFIELILKHHPRFSNQEIPVWSGREEPFSLEGGDELVLTEETILVGVSERTDARAVERLAESLFSRSPKIKRVLAVEIPETRSFMHLDTVFTMVNYAQFTIHPAIQNQQGELNIYILEKSENGLDITPRRDFKRVIAEVLGEPEVDFIPCGGEDVIVSAREQWNDGANTLAIAPGEVITYDRNQVSNDLLRSAGIKVHEVISSELSRGRGGPRCMTMPLSRENLK.

C399 (amidino-cysteine intermediate) is an active-site residue.

This sequence belongs to the arginine deiminase family.

Its subcellular location is the cytoplasm. The catalysed reaction is L-arginine + H2O = L-citrulline + NH4(+). It functions in the pathway amino-acid degradation; L-arginine degradation via ADI pathway; carbamoyl phosphate from L-arginine: step 1/2. The chain is Arginine deiminase from Listeria monocytogenes serotype 4a (strain HCC23).